The primary structure comprises 491 residues: Ketol-acid reductoisomerase (NADP(+)) (491 aa).

The KARI N-terminal Rossmann domain maps to 15–208 (AQLGKCRFMG…GGHRAGVLES (194 aa)). NADP(+)-binding positions include 45 to 48 (CGAQ), arginine 68, arginine 76, serine 78, and 108 to 110 (DKQ). Histidine 132 is a catalytic residue. Glycine 158 is a binding site for NADP(+). KARI C-terminal knotted domains follow at residues 209 to 344 (SFVA…TAPQ) and 345 to 484 (YEGK…MTDM). The Mg(2+) site is built by aspartate 217, glutamate 221, glutamate 389, and glutamate 393. A substrate-binding site is contributed by serine 414.

It belongs to the ketol-acid reductoisomerase family. Mg(2+) serves as cofactor.

The catalysed reaction is (2R)-2,3-dihydroxy-3-methylbutanoate + NADP(+) = (2S)-2-acetolactate + NADPH + H(+). It carries out the reaction (2R,3R)-2,3-dihydroxy-3-methylpentanoate + NADP(+) = (S)-2-ethyl-2-hydroxy-3-oxobutanoate + NADPH + H(+). It functions in the pathway amino-acid biosynthesis; L-isoleucine biosynthesis; L-isoleucine from 2-oxobutanoate: step 2/4. The protein operates within amino-acid biosynthesis; L-valine biosynthesis; L-valine from pyruvate: step 2/4. Involved in the biosynthesis of branched-chain amino acids (BCAA). Catalyzes an alkyl-migration followed by a ketol-acid reduction of (S)-2-acetolactate (S2AL) to yield (R)-2,3-dihydroxy-isovalerate. In the isomerase reaction, S2AL is rearranged via a Mg-dependent methyl migration to produce 3-hydroxy-3-methyl-2-ketobutyrate (HMKB). In the reductase reaction, this 2-ketoacid undergoes a metal-dependent reduction by NADPH to yield (R)-2,3-dihydroxy-isovalerate. This chain is Ketol-acid reductoisomerase (NADP(+)), found in Escherichia coli O8 (strain IAI1).